We begin with the raw amino-acid sequence, 504 residues long: Maturase K (504 aa).

Belongs to the intron maturase 2 family. MatK subfamily.

It localises to the plastid. Its subcellular location is the chloroplast. Usually encoded in the trnK tRNA gene intron. Probably assists in splicing its own and other chloroplast group II introns. This chain is Maturase K, found in Aucuba japonica (Japanese laurel).